Consider the following 410-residue polypeptide: CinA-like protein (410 aa).

This sequence belongs to the CinA family.

The protein is CinA-like protein of Anaeromyxobacter sp. (strain Fw109-5).